The sequence spans 346 residues: Ribonucleoside-diphosphate reductase subunit beta (346 aa).

3 residues coordinate Fe cation: glutamate 89, glutamate 120, and histidine 123. Tyrosine 129 is an active-site residue. Fe cation contacts are provided by glutamate 193, glutamate 227, and histidine 230.

The protein belongs to the ribonucleoside diphosphate reductase small chain family. In terms of assembly, tetramer of two alpha and two beta subunits. The cofactor is Fe cation.

The enzyme catalyses a 2'-deoxyribonucleoside 5'-diphosphate + [thioredoxin]-disulfide + H2O = a ribonucleoside 5'-diphosphate + [thioredoxin]-dithiol. In terms of biological role, provides the precursors necessary for DNA synthesis. Catalyzes the biosynthesis of deoxyribonucleotides from the corresponding ribonucleotides. The polypeptide is Ribonucleoside-diphosphate reductase subunit beta (nrdB) (Chlamydia pneumoniae (Chlamydophila pneumoniae)).